A 252-amino-acid chain; its full sequence is tRNA (guanine-N(1)-)-methyltransferase (252 aa).

Residues Gly113 and 133–138 each bind S-adenosyl-L-methionine; that span reads LGDYVL.

It belongs to the RNA methyltransferase TrmD family. In terms of assembly, homodimer.

The protein resides in the cytoplasm. The catalysed reaction is guanosine(37) in tRNA + S-adenosyl-L-methionine = N(1)-methylguanosine(37) in tRNA + S-adenosyl-L-homocysteine + H(+). Specifically methylates guanosine-37 in various tRNAs. This is tRNA (guanine-N(1)-)-methyltransferase from Stenotrophomonas maltophilia (strain R551-3).